The following is a 400-amino-acid chain: MKRVLLTVAMLSVFFSAMFAFFPDVPKDHWAYEYVWKLWQRGIFIGYPDGEFKGDRYITRYEAATAVSRLLDFIEQKMLAGASGDLAQVVGNLSDKYMALEEKVNGLTGILDTLASQIGTTQANLTETERELLEKIDAVKEEIEMEFDKEISLNREVVNNIGLKLGNLSRDYERYKENVDAKISEVNEKLAALEKDLGNKIADLEGIVNLHEKDIINIYNKISSVNEELNNKIAATEEKLSRKDEEISAMVELHEKDIINLYNKVAALNEDLNKKILDTKAELSAKIESQEKTLNMVYTKLLDTESKLNDEISALKEKDAEIQKTVDLHEQDIVNLYGKTSSLEEDLNMKYNETNEKIDQVKAELEDKIESVKAYNRNLSILTGAFFGILGLILIAISGK.

An N-terminal signal peptide occupies residues 1-20; that stretch reads MKRVLLTVAMLSVFFSAMFA. Positions 21 to 81 constitute an SLH domain; the sequence is FFPDVPKDHW…DFIEQKMLAG (61 aa). Residues 85 to 379 are a coiled coil; it reads DLAQVVGNLS…ESVKAYNRNL (295 aa). 3 tandem repeats follow at residues 208 to 232, 251 to 275, and 326 to 350. The 3 X 25 AA approximate repeat stretch occupies residues 208–350; the sequence is VNLHEKDIIN…SSLEEDLNMK (143 aa). The chain crosses the membrane as a helical span at residues 380–400; that stretch reads SILTGAFFGILGLILIAISGK.

As to quaternary structure, homotetramer.

It localises to the cell outer membrane. Links the outer membrane to the inner membrane. Long fibrous protein that could serve to separate the two membranes. This Thermotoga maritima (strain ATCC 43589 / DSM 3109 / JCM 10099 / NBRC 100826 / MSB8) protein is Outer membrane protein alpha (omp-alpha).